We begin with the raw amino-acid sequence, 209 residues long: Ribonuclease HII (209 aa).

The region spanning 18 to 209 (GLIAGVDEVG…FKPVKALLEG (192 aa)) is the RNase H type-2 domain. Asp-24, Glu-25, and Asp-116 together coordinate a divalent metal cation.

This sequence belongs to the RNase HII family. Mn(2+) serves as cofactor. Requires Mg(2+) as cofactor.

The protein resides in the cytoplasm. It carries out the reaction Endonucleolytic cleavage to 5'-phosphomonoester.. In terms of biological role, endonuclease that specifically degrades the RNA of RNA-DNA hybrids. This chain is Ribonuclease HII, found in Shewanella putrefaciens (strain CN-32 / ATCC BAA-453).